The primary structure comprises 298 residues: Mitochondrial dicarboxylate/tricarboxylate transporter DTC (298 aa).

Solcar repeat units follow at residues 12–93, 103–194, and 202–292; these read WTTV…LTAK, LPLY…SAEY, and GEMS…ITKF. The next 6 helical transmembrane spans lie at 18-38, 68-88, 109-129, 169-189, 208-228, and 268-288; these read FVNG…IDMI, GLSA…GSFK, ALCG…ADLA, GCGP…ASYD, VGAS…FDFV, and FPVY…FLNQ.

Belongs to the mitochondrial carrier (TC 2.A.29) family. In terms of tissue distribution, highly expressed in flower buds and at lower levels in roots, leaves and stems.

It is found in the mitochondrion inner membrane. Its function is as follows. Catalyzes the transport of dicarboxylates, such as oxoglutarate, oxaloacetate, malate, and succinate, and of tricarboxylates, such as citrate, isocitrate, cis-aconitate, and trans-aconitate by a counter-exchange mechanism across the inner mitochondrial membrane. Substrate preference in reconstituted proteoliposomes is oxaloacetate &gt; malonate &gt; malate &gt; maleate &gt; succinate &gt; oxoglutarate &gt; citrate &gt; trans-aconitate &gt; cis-aconitate &gt; sulfate &gt; isocitrate. May be important for plant metabolic functions requiring organic acid flux to or from the mitochondria, such as nitrogen assimilation, export of reducing equivalents from the mitochondria, and fatty acid elongation. The polypeptide is Mitochondrial dicarboxylate/tricarboxylate transporter DTC (DTC) (Arabidopsis thaliana (Mouse-ear cress)).